A 492-amino-acid polypeptide reads, in one-letter code: Catalase (492 aa).

Active-site residues include His65 and Asn138. Tyr348 lines the heme pocket.

This sequence belongs to the catalase family. Homotetramer. Heme serves as cofactor.

Its subcellular location is the cytoplasm. The protein localises to the cytosol. It is found in the peroxisome matrix. It carries out the reaction 2 H2O2 = O2 + 2 H2O. In terms of biological role, catalyzes the degradation of hydrogen peroxide (H(2)O(2)) generated by peroxisomal oxidases to water and oxygen, thereby protecting cells from the toxic effects of hydrogen peroxide. This Ipomoea batatas (Sweet potato) protein is Catalase.